The chain runs to 225 residues: MGKKSKRYRAALEKQPKEMLPLGKAVEVLKTYDATKFDQTVEVHMRLGVDPNQADQIIRGSLVLPHGIGKTQRVIVFAKGDAAKAAEEAGADEVGQEDLAKKIKDGWTDFDVCIAAPDMMGLVGPLGRVLGPRGLMPSPRAGTVTPDVGKVVSEYKAGKVEFRNDKGGNVHAMVGKMSFEANKLEENIASFVDFISAMKPQSIKGTYIKGVAICATMTPSVRVAT.

It belongs to the universal ribosomal protein uL1 family. As to quaternary structure, part of the 50S ribosomal subunit.

Functionally, binds directly to 23S rRNA. The L1 stalk is quite mobile in the ribosome, and is involved in E site tRNA release. Protein L1 is also a translational repressor protein, it controls the translation of the L11 operon by binding to its mRNA. In Rhodopirellula baltica (strain DSM 10527 / NCIMB 13988 / SH1), this protein is Large ribosomal subunit protein uL1.